The chain runs to 125 residues: Large ribosomal subunit protein bL20 (125 aa).

Belongs to the bacterial ribosomal protein bL20 family.

Its function is as follows. Binds directly to 23S ribosomal RNA and is necessary for the in vitro assembly process of the 50S ribosomal subunit. It is not involved in the protein synthesizing functions of that subunit. This chain is Large ribosomal subunit protein bL20, found in Zymomonas mobilis subsp. mobilis (strain ATCC 31821 / ZM4 / CP4).